Reading from the N-terminus, the 164-residue chain is MRLTSKGRYAVTAMLDVALHSQDGPVPLADISERQGISLSYLEQLFSRLRKNGLVASVRGPGGGYLLGKDASAIAVGAVITAVDESVDATRCQGKEGCQGGNRCLTHTLWRDLSERISSFLNNITLAELVNNQDILEVADRQNNDTRRTANGRPQETINVNLRA.

The HTH rrf2-type domain maps to Arg-2 to Asn-131. Residues Leu-28–Lys-51 constitute a DNA-binding region (H-T-H motif). [2Fe-2S] cluster contacts are provided by Cys-92, Cys-98, and Cys-104. Positions Asn-143 to Ala-164 are disordered. Positions Gly-152–Ala-164 are enriched in polar residues.

Requires [2Fe-2S] cluster as cofactor.

In terms of biological role, regulates the transcription of several operons and genes involved in the biogenesis of Fe-S clusters and Fe-S-containing proteins. This is HTH-type transcriptional regulator IscR from Yersinia pseudotuberculosis serotype O:1b (strain IP 31758).